The primary structure comprises 312 residues: DNA-directed RNA polymerase subunit alpha (312 aa).

The tract at residues 1–226 (MIEFKKPNIT…EHFKAFESAD (226 aa)) is alpha N-terminal domain (alpha-NTD). The segment at 243-312 (KEKKLEMTIE…DLGLSLRQED (70 aa)) is alpha C-terminal domain (alpha-CTD).

It belongs to the RNA polymerase alpha chain family. In terms of assembly, homodimer. The RNAP catalytic core consists of 2 alpha, 1 beta, 1 beta' and 1 omega subunit. When a sigma factor is associated with the core the holoenzyme is formed, which can initiate transcription.

It catalyses the reaction RNA(n) + a ribonucleoside 5'-triphosphate = RNA(n+1) + diphosphate. Its function is as follows. DNA-dependent RNA polymerase catalyzes the transcription of DNA into RNA using the four ribonucleoside triphosphates as substrates. This chain is DNA-directed RNA polymerase subunit alpha, found in Lactobacillus delbrueckii subsp. bulgaricus (strain ATCC 11842 / DSM 20081 / BCRC 10696 / JCM 1002 / NBRC 13953 / NCIMB 11778 / NCTC 12712 / WDCM 00102 / Lb 14).